Here is a 222-residue protein sequence, read N- to C-terminus: N-(5'-phosphoribosyl)anthranilate isomerase (222 aa).

It belongs to the TrpF family.

It carries out the reaction N-(5-phospho-beta-D-ribosyl)anthranilate = 1-(2-carboxyphenylamino)-1-deoxy-D-ribulose 5-phosphate. The protein operates within amino-acid biosynthesis; L-tryptophan biosynthesis; L-tryptophan from chorismate: step 3/5. The sequence is that of N-(5'-phosphoribosyl)anthranilate isomerase from Brucella abortus (strain S19).